The sequence spans 208 residues: Probable nicotinate-nucleotide adenylyltransferase (208 aa).

It belongs to the NadD family.

It catalyses the reaction nicotinate beta-D-ribonucleotide + ATP + H(+) = deamido-NAD(+) + diphosphate. The protein operates within cofactor biosynthesis; NAD(+) biosynthesis; deamido-NAD(+) from nicotinate D-ribonucleotide: step 1/1. Functionally, catalyzes the reversible adenylation of nicotinate mononucleotide (NaMN) to nicotinic acid adenine dinucleotide (NaAD). This Symbiobacterium thermophilum (strain DSM 24528 / JCM 14929 / IAM 14863 / T) protein is Probable nicotinate-nucleotide adenylyltransferase.